Here is a 356-residue protein sequence, read N- to C-terminus: Cobalt-precorrin-5B C(1)-methyltransferase (356 aa).

The protein belongs to the CbiD family.

It carries out the reaction Co-precorrin-5B + S-adenosyl-L-methionine = Co-precorrin-6A + S-adenosyl-L-homocysteine. It participates in cofactor biosynthesis; adenosylcobalamin biosynthesis; cob(II)yrinate a,c-diamide from sirohydrochlorin (anaerobic route): step 6/10. Functionally, catalyzes the methylation of C-1 in cobalt-precorrin-5B to form cobalt-precorrin-6A. The polypeptide is Cobalt-precorrin-5B C(1)-methyltransferase (Citrifermentans bemidjiense (strain ATCC BAA-1014 / DSM 16622 / JCM 12645 / Bem) (Geobacter bemidjiensis)).